The sequence spans 453 residues: MLSRSRCVSRAFSRSLSAFQKGNCPLGRRSLPGVSLCQGPGYPNSRKVVINNSVFSVRFFRTTAVCKDDLVTVKTPAFAESVTEGDVRWEKAVGDTVAEDEVVCEIETDKTSVQVPSPANGVIEALLVPDGGKVEGGTPLFTLRKTGAAPAKAKPAEAPAAAAPKAEPTAAAVPPPAAPIPTQMPPVPSPSQPPSGKPVSAVKPTVAPPLAEPGAGKGLRSEHREKMNRMRQRIAQRLKEAQNTCAMLTTFNEIDMSNIQEMRARHKEAFLKKHNLKLGFMSAFVKASAFALQEQPVVNAVIDDTTKEVVYRDYIDISVAVATPRGLVVPVIRNVEAMNFADIERTITELGEKARKNELAIEDMDGGTFTISNGGVFGSLFGTPIINPPQSAILGMHGIFDRPVAIGGKVEVRPMMYVALTYDHRLIDGREAVTFLRKIKAAVEDPRVLLLDL.

Residues 1-67 (MLSRSRCVSR…RFFRTTAVCK (67 aa)) constitute a mitochondrion transit peptide. Positions 70–144 (LVTVKTPAFA…EGGTPLFTLR (75 aa)) constitute a Lipoyl-binding domain. Ser81 carries the post-translational modification Phosphoserine. An N6-lipoyllysine modification is found at Lys110. Positions 152 to 172 (KAKPAEAPAAAAPKAEPTAAA) are enriched in low complexity. Positions 152–225 (KAKPAEAPAA…GKGLRSEHRE (74 aa)) are disordered. At Lys154 the chain carries N6-acetyllysine. Residues 173-196 (VPPPAAPIPTQMPPVPSPSQPPSG) show a composition bias toward pro residues. N6-acetyllysine occurs at positions 267, 272, 273, 277, and 307. Residues His424 and Asp428 contribute to the active site.

This sequence belongs to the 2-oxoacid dehydrogenase family. In terms of assembly, the 2-oxoglutarate dehydrogenase complex is composed of OGDH (2-oxoglutarate dehydrogenase; E1), DLST (dihydrolipoamide succinyltransferase; E2), DLD (dihydrolipoamide dehydrogenase; E3) and the assembly factor KGD4. It contains multiple copies of the three enzymatic components (E1, E2 and E3). In the nucleus, the 2-oxoglutarate dehydrogenase complex associates with KAT2A. Interacts with ABHD11; this interaction maintains the functional lipoylation of the 2-oxoglutarate dehydrogenase complex. (R)-lipoate serves as cofactor.

The protein localises to the mitochondrion matrix. It localises to the nucleus. It carries out the reaction N(6)-[(R)-dihydrolipoyl]-L-lysyl-[protein] + succinyl-CoA = N(6)-[(R)-S(8)-succinyldihydrolipoyl]-L-lysyl-[protein] + CoA. The protein operates within amino-acid degradation; L-lysine degradation via saccharopine pathway; glutaryl-CoA from L-lysine: step 6/6. It participates in carbohydrate metabolism; tricarboxylic acid cycle. Its function is as follows. Dihydrolipoamide succinyltransferase (E2) component of the 2-oxoglutarate dehydrogenase complex. The 2-oxoglutarate dehydrogenase complex catalyzes the overall conversion of 2-oxoglutarate to succinyl-CoA and CO(2). The 2-oxoglutarate dehydrogenase complex is mainly active in the mitochondrion. A fraction of the 2-oxoglutarate dehydrogenase complex also localizes in the nucleus and is required for lysine succinylation of histones: associates with KAT2A on chromatin and provides succinyl-CoA to histone succinyltransferase KAT2A. The sequence is that of Dihydrolipoyllysine-residue succinyltransferase component of 2-oxoglutarate dehydrogenase complex, mitochondrial from Homo sapiens (Human).